A 788-amino-acid polypeptide reads, in one-letter code: Endonuclease MutS2 (788 aa).

332–339 contributes to the ATP binding site; sequence GPNTGGKT. The 76-residue stretch at 713 to 788 folds into the Smr domain; that stretch reads VDLRGMDAEE…GTGVTVVELK (76 aa).

The protein belongs to the DNA mismatch repair MutS family. MutS2 subfamily. Homodimer. Binds to stalled ribosomes, contacting rRNA.

Endonuclease that is involved in the suppression of homologous recombination and thus may have a key role in the control of bacterial genetic diversity. In terms of biological role, acts as a ribosome collision sensor, splitting the ribosome into its 2 subunits. Detects stalled/collided 70S ribosomes which it binds and splits by an ATP-hydrolysis driven conformational change. Acts upstream of the ribosome quality control system (RQC), a ribosome-associated complex that mediates the extraction of incompletely synthesized nascent chains from stalled ribosomes and their subsequent degradation. Probably generates substrates for RQC. This chain is Endonuclease MutS2, found in Clostridium botulinum (strain Langeland / NCTC 10281 / Type F).